The sequence spans 481 residues: Methylenetetrahydrofolate--tRNA-(uracil-5-)-methyltransferase TrmFO (481 aa).

13–18 contributes to the FAD binding site; it reads GGGLAG.

The protein belongs to the MnmG family. TrmFO subfamily. It depends on FAD as a cofactor.

The protein localises to the cytoplasm. It catalyses the reaction uridine(54) in tRNA + (6R)-5,10-methylene-5,6,7,8-tetrahydrofolate + NADH + H(+) = 5-methyluridine(54) in tRNA + (6S)-5,6,7,8-tetrahydrofolate + NAD(+). It carries out the reaction uridine(54) in tRNA + (6R)-5,10-methylene-5,6,7,8-tetrahydrofolate + NADPH + H(+) = 5-methyluridine(54) in tRNA + (6S)-5,6,7,8-tetrahydrofolate + NADP(+). Functionally, catalyzes the folate-dependent formation of 5-methyl-uridine at position 54 (M-5-U54) in all tRNAs. This is Methylenetetrahydrofolate--tRNA-(uracil-5-)-methyltransferase TrmFO from Agrobacterium fabrum (strain C58 / ATCC 33970) (Agrobacterium tumefaciens (strain C58)).